The chain runs to 244 residues: Demethylmenaquinone methyltransferase (244 aa).

S-adenosyl-L-methionine is bound by residues Thr-65, Asp-86, and 114–115 (DA).

This sequence belongs to the class I-like SAM-binding methyltransferase superfamily. MenG/UbiE family.

The enzyme catalyses a 2-demethylmenaquinol + S-adenosyl-L-methionine = a menaquinol + S-adenosyl-L-homocysteine + H(+). It participates in quinol/quinone metabolism; menaquinone biosynthesis; menaquinol from 1,4-dihydroxy-2-naphthoate: step 2/2. Methyltransferase required for the conversion of demethylmenaquinol (DMKH2) to menaquinol (MKH2). This is Demethylmenaquinone methyltransferase from Lactobacillus johnsonii (strain CNCM I-12250 / La1 / NCC 533).